A 490-amino-acid chain; its full sequence is Aspartyl/glutamyl-tRNA(Asn/Gln) amidotransferase subunit B (490 aa).

This sequence belongs to the GatB/GatE family. GatB subfamily. In terms of assembly, heterotrimer of A, B and C subunits.

The catalysed reaction is L-glutamyl-tRNA(Gln) + L-glutamine + ATP + H2O = L-glutaminyl-tRNA(Gln) + L-glutamate + ADP + phosphate + H(+). The enzyme catalyses L-aspartyl-tRNA(Asn) + L-glutamine + ATP + H2O = L-asparaginyl-tRNA(Asn) + L-glutamate + ADP + phosphate + 2 H(+). In terms of biological role, allows the formation of correctly charged Asn-tRNA(Asn) or Gln-tRNA(Gln) through the transamidation of misacylated Asp-tRNA(Asn) or Glu-tRNA(Gln) in organisms which lack either or both of asparaginyl-tRNA or glutaminyl-tRNA synthetases. The reaction takes place in the presence of glutamine and ATP through an activated phospho-Asp-tRNA(Asn) or phospho-Glu-tRNA(Gln). The sequence is that of Aspartyl/glutamyl-tRNA(Asn/Gln) amidotransferase subunit B from Burkholderia pseudomallei (strain 1106a).